We begin with the raw amino-acid sequence, 391 residues long: MPGPQGGRGAATMSLGKLSPVGWVSSSQGKRRLTADMISHPLGDFRHTMHVGRGGDVFGDTSFLSNHGGSSGSTHRSPRSFLAKKLQLVRRVGAPPRRMASPPAPSPAPPAISPIIKNAISLPQLNQAAYDSLVVGKLSFDSSPTSSTDGHSSYGLDSGFCTISRLPRSEKPHDRDRDGSFPSEPGLRRSDSLLSFRLDLDLGPSLLSELLGVMSLPEAPAAETPAPAANPPAPTANPTGPAANPPATTANPPAPAANPSAPAATPTGPAANPPAPAASSTPHGHCPNGVTAGLGPVAEVKSSPVGGGPRGPAGPALGRHWGAGWDGGHHYPEMDARQERVEVLPQARASWESLDEEWRAPQAGSRTPVPSTVQANTFEFADAEEDDEVKV.

S19 and S27 each carry phosphoserine. A Phosphothreonine modification is found at T34. One can recognise a CRIB domain in the interval 38–52 (ISHPLGDFRHTMHVG). A Phosphoserine modification is found at S39. At R53 the chain carries Omega-N-methylarginine. S65, S73, S77, S101, S113, S121, and S139 each carry phosphoserine. The interval 163–189 (ISRLPRSEKPHDRDRDGSFPSEPGLRR) is disordered. Positions 167–179 (PRSEKPHDRDRDG) are enriched in basic and acidic residues. 4 positions are modified to phosphoserine: S180, S190, S192, and S195. A run of 8 repeats spans residues 220–226 (PAAETPA), 227–233 (PAANPPA), 234–240 (PTANPTG), 241–247 (PAANPPA), 248–254 (TTANPPA), 255–261 (PAANPSA), 262–268 (PAATPTG), and 269–275 (PAANPPA). The 8 X 7 AA tandem repeats of [PT]-[AT]-A-[ENT]-[PT]-[PTS]-[AG] stretch occupies residues 220–275 (PAAETPAPAANPPAPTANPTGPAANPPATTANPPAPAANPSAPAATPTGPAANPPA). The segment at 221–338 (AAETPAPAAN…HHYPEMDARQ (118 aa)) is disordered. Residues 236-270 (ANPTGPAANPPATTANPPAPAANPSAPAATPTGPA) show a composition bias toward low complexity. S303 is subject to Phosphoserine. Basic and acidic residues predominate over residues 327–338 (GGHHYPEMDARQ). S350 and S353 each carry phosphoserine. The interval 354–391 (LDEEWRAPQAGSRTPVPSTVQANTFEFADAEEDDEVKV) is disordered. The segment covering 364–377 (GSRTPVPSTVQANT) has biased composition (polar residues). The span at 381–391 (ADAEEDDEVKV) shows a compositional bias: acidic residues.

It belongs to the BORG/CEP family. Interacts with RHOQ and CDC42, in a GTP-dependent manner. As to expression, endothelial and bone marrow stromal cells.

The protein resides in the endomembrane system. It localises to the cytoplasm. Its subcellular location is the cytoskeleton. Its function is as follows. Probably involved in the organization of the actin cytoskeleton. Induced membrane extensions in fibroblasts. The protein is Cdc42 effector protein 1 (CDC42EP1) of Homo sapiens (Human).